The primary structure comprises 325 residues: Casein kinase I isoform alpha (325 aa).

An N-acetylalanine modification is found at Ala-2. Ser-4 carries the phosphoserine modification. Lys-8 is subject to N6-acetyllysine. The Protein kinase domain occupies 17–285; that stretch reads YKLVRKIGSG…YLRQLFRILF (269 aa). Residues 23-31 and Lys-46 contribute to the ATP site; that span reads IGSGSFGDI. Asp-136 (proton acceptor) is an active-site residue. Ile-156 is modified (phosphoserine).

The protein belongs to the protein kinase superfamily. CK1 Ser/Thr protein kinase family. Casein kinase I subfamily. As to quaternary structure, interacts with the Axin complex. Interacts with TUT1, leading to TUT1 phosphorylation. Interacts with FAM83A, FAM83B, FAM83C, FAM83D, FAM83E, FAM83F, FAM83G and FAM83H (via DUF1669). Interaction with FAM83H recruits CSNK1A1 to keratin filaments. In terms of processing, phosphorylated by MTOR in response to mitogenic stimulation, leading to its activation.

The protein localises to the cytoplasm. It localises to the cytoskeleton. The protein resides in the microtubule organizing center. Its subcellular location is the centrosome. It is found in the chromosome. The protein localises to the centromere. It localises to the kinetochore. The protein resides in the nucleus speckle. Its subcellular location is the cilium basal body. It is found in the spindle. The enzyme catalyses L-seryl-[protein] + ATP = O-phospho-L-seryl-[protein] + ADP + H(+). It carries out the reaction L-threonyl-[protein] + ATP = O-phospho-L-threonyl-[protein] + ADP + H(+). Casein kinases are operationally defined by their preferential utilization of acidic proteins such as caseins as substrates. Can phosphorylate a large number of proteins. Participates in Wnt signaling. Phosphorylates CTNNB1 at 'Ser-45'. May phosphorylate PER1 and PER2. May play a role in segregating chromosomes during mitosis. May play a role in keratin cytoskeleton disassembly and thereby, it may regulate epithelial cell migration. Acts as a positive regulator of mTORC1 and mTORC2 signaling in response to nutrients by mediating phosphorylation of DEPTOR inhibitor. Acts as an inhibitor of NLRP3 inflammasome assembly by mediating phosphorylation of NLRP3. The chain is Casein kinase I isoform alpha (Csnk1a1) from Rattus norvegicus (Rat).